The following is a 212-amino-acid chain: Endoplasmic reticulum vesicle protein 25 (212 aa).

Positions 1 to 21 (MKSFAACVLLLCALFFEQVFA) are cleaved as a signal peptide. At 22-181 (VRFDIPASTK…TNESTNRRVR (160 aa)) the chain is on the lumenal side. The GOLD domain occupies 34–122 (QVCIRDFVSE…SRSIELDIES (89 aa)). Residues 182-202 (NFSIAVIVVLVALGAWQVNYM) form a helical membrane-spanning segment. Residues 203–212 (KNFFRAKHII) are Cytoplasmic-facing.

This sequence belongs to the EMP24/GP25L family.

It is found in the endoplasmic reticulum membrane. It localises to the golgi apparatus membrane. Functionally, constituent of COPII-coated endoplasmic reticulum-derived transport vesicles. Required for efficient transport of a subset of secretory proteins to the Golgi. Facilitates retrograde transport from the Golgi to the endoplasmic reticulum. The sequence is that of Endoplasmic reticulum vesicle protein 25 (ERV25) from Kluyveromyces lactis (strain ATCC 8585 / CBS 2359 / DSM 70799 / NBRC 1267 / NRRL Y-1140 / WM37) (Yeast).